A 328-amino-acid chain; its full sequence is Bidirectional sugar transporter SWEET16 (328 aa).

The Extracellular segment spans residues 1–5 (MADPS). Residues 6–26 (FFVGIVGNVISILVFASPIAT) traverse the membrane as a helical segment. The MtN3/slv 1 domain maps to 6–92 (FFVGIVGNVI…TLYLAYAPRE (87 aa)). Topologically, residues 27-38 (FRRIVRSKSTEE) are cytoplasmic. Residues 39 to 56 (FRWLPYVTTLLSTSLWTF) form a helical membrane-spanning segment. Residues 57 to 63 (YGLHKPG) are Extracellular-facing. Residues 64–84 (GLLIVTVNGSGAALEAIYVTL) form a helical membrane-spanning segment. Residues 85–99 (YLAYAPRETKAKMVK) are Cytoplasmic-facing. A helical membrane pass occupies residues 100–120 (VVLAVNVGALAAVVAVALVAL). Residues 121-125 (HGGVR) are Extracellular-facing. The helical transmembrane segment at 126–146 (LFVVGVLCAALTIGMYAAPMA) threads the bilayer. A MtN3/slv 2 domain is found at 127–213 (FVVGVLCAAL…LYMAYRRTKK (87 aa)). The Cytoplasmic portion of the chain corresponds to 147–161 (AMRTVVKTRSVEYMP). The helical transmembrane segment at 162–182 (FSLSFFLFLNGGVWSVYSLLV) threads the bilayer. The Extracellular segment spans residues 183–185 (KDY). Residues 186 to 206 (FIGIPNAIGFALGTAQLALYM) form a helical membrane-spanning segment. The Cytoplasmic portion of the chain corresponds to 207 to 328 (AYRRTKKPAG…ATTAGPGDRH (122 aa)). Residues 288 to 299 (HQHHGGHHHHHR) show a composition bias toward basic residues. Positions 288–328 (HQHHGGHHHHHRFDTVPDDDDEAVAAGGTTPATTAGPGDRH) are disordered. Over residues 312-328 (AAGGTTPATTAGPGDRH) the composition is skewed to low complexity.

Belongs to the SWEET sugar transporter family. As to quaternary structure, forms homooligomers and/or heterooligomers.

The protein localises to the cell membrane. Mediates both low-affinity uptake and efflux of sugar across the plasma membrane. The sequence is that of Bidirectional sugar transporter SWEET16 (SWEET16) from Oryza sativa subsp. japonica (Rice).